The sequence spans 200 residues: Diadenylate cyclase (200 aa).

Residues 5 to 25 (ILLFITLIFLLLLFVFLIAFA) form a helical membrane-spanning segment. The DAC domain occupies 28–185 (NKRVRNYVVR…KGVIKTLSSN (158 aa)).

Belongs to the adenylate cyclase family. DacB/CdaS subfamily. Probably oligomerizes.

The protein resides in the cell membrane. It catalyses the reaction 2 ATP = 3',3'-c-di-AMP + 2 diphosphate. Functionally, catalyzes the condensation of 2 ATP molecules into cyclic di-AMP (c-di-AMP), a second messenger used to regulate differing processes in different bacteria. This chain is Diadenylate cyclase, found in Mycoplasma genitalium (strain ATCC 33530 / DSM 19775 / NCTC 10195 / G37) (Mycoplasmoides genitalium).